The chain runs to 178 residues: Oligoribonuclease (178 aa).

The 162-residue stretch at 7–168 folds into the Exonuclease domain; sequence LIWIDLEMTG…DDIRESIAEL (162 aa). Y128 is a catalytic residue.

It belongs to the oligoribonuclease family.

The protein resides in the cytoplasm. In terms of biological role, 3'-to-5' exoribonuclease specific for small oligoribonucleotides. The chain is Oligoribonuclease from Pseudomonas syringae pv. tomato (strain ATCC BAA-871 / DC3000).